A 366-amino-acid polypeptide reads, in one-letter code: tRNA/tmRNA (uracil-C(5))-methyltransferase (366 aa).

Glutamine 190, tyrosine 218, asparagine 223, glutamate 239, and aspartate 299 together coordinate S-adenosyl-L-methionine. The active-site Nucleophile is the cysteine 324. Glutamate 358 serves as the catalytic Proton acceptor.

It belongs to the class I-like SAM-binding methyltransferase superfamily. RNA M5U methyltransferase family. TrmA subfamily.

The catalysed reaction is uridine(54) in tRNA + S-adenosyl-L-methionine = 5-methyluridine(54) in tRNA + S-adenosyl-L-homocysteine + H(+). It catalyses the reaction uridine(341) in tmRNA + S-adenosyl-L-methionine = 5-methyluridine(341) in tmRNA + S-adenosyl-L-homocysteine + H(+). Dual-specificity methyltransferase that catalyzes the formation of 5-methyluridine at position 54 (m5U54) in all tRNAs, and that of position 341 (m5U341) in tmRNA (transfer-mRNA). This Escherichia coli O17:K52:H18 (strain UMN026 / ExPEC) protein is tRNA/tmRNA (uracil-C(5))-methyltransferase.